We begin with the raw amino-acid sequence, 2230 residues long: Golgin subfamily A member 4 (2230 aa).

Residues 1–64 are disordered; that stretch reads MFKKLKQKIS…SGDTQSFAQK (64 aa). Position 10 is a phosphoserine (Ser10). Low complexity predominate over residues 12–41; the sequence is EQQQLQQALAPAQASSNSSTPTRMRSRTSS. A Phosphothreonine modification is found at Thr39. Ser41, Ser71, Ser78, and Ser89 each carry phosphoserine. Positions 87–107 are enriched in basic and acidic residues; it reads SSSKESLVRTSSRESLNRLDL. The disordered stretch occupies residues 87 to 127; that stretch reads SSSKESLVRTSSRESLNRLDLDSSTASFDPPSDMDSEAEDL. The interval 133 to 203 is interaction with MACF1; sequence SLNKEQLIQR…EELQMDQQAK (71 aa). Residues 133-2185 adopt a coiled-coil conformation; sequence SLNKEQLIQR…EYLRKVLFEY (2053 aa). A Phosphoserine modification is found at Ser266. N-linked (GlcNAc...) asparagine glycans are attached at residues Asn585 and Asn1612. Residues 2168–2215 form the GRIP domain; that stretch reads LFGEPTEFEYLRKVLFEYMMGRETKTMAKVITTVLKFPDDQTQKILER. Residue Thr2223 is modified to Phosphothreonine.

In terms of assembly, homodimer. Interacts with RAB6A. Interacts with GTP-bound ARL1 and ARL3. Interacts with MACF1. Directly interacts with TBC1D23. Interacts with FAM91A1; this interaction may be mediated by TBC1D23.

The protein resides in the cytoplasm. Its subcellular location is the golgi apparatus membrane. It is found in the golgi apparatus. The protein localises to the trans-Golgi network membrane. Involved in vesicular trafficking at the Golgi apparatus level. May play a role in delivery of transport vesicles containing GPI-linked proteins from the trans-Golgi network through its interaction with MACF1. Involved in endosome-to-Golgi trafficking. This Homo sapiens (Human) protein is Golgin subfamily A member 4 (GOLGA4).